The following is a 93-amino-acid chain: Protein YzgL (93 aa).

This Escherichia coli (strain K12) protein is Protein YzgL (yzgL).